The sequence spans 661 residues: Putative core protein L410 (661 aa).

Residues 1 to 11 are compositionally biased toward basic and acidic residues; it reads MADNKGRRDTF. The disordered stretch occupies residues 1 to 26; it reads MADNKGRRDTFDVSGDTNTNATSNKR. The span at 15-25 shows a compositional bias: polar residues; the sequence is GDTNTNATSNK. A coiled-coil region spans residues 112 to 140; that stretch reads KKENKWSDKEYDEFRKELTNLLTGNRALE.

It is found in the virion. The chain is Putative core protein L410 from Acanthamoeba polyphaga (Amoeba).